A 159-amino-acid polypeptide reads, in one-letter code: Short coiled-coil protein (159 aa).

A coiled-coil region spans residues 78 to 146; that stretch reads MMNADMDAVD…QYIENLMSAS (69 aa).

Belongs to the SCOC family. As to quaternary structure, homodimer. Interacts with ARL1, ARL2 and ARL3. Directly interacts with FEZ1 and UVRAG. The interaction with UVRAG is reduced by amino acid starvation, but the complex is stabilized in the presence of FEZ1. Interacts with NRBF2. Widely expressed with highest levels in brain, heart and skeletal muscle.

The protein localises to the golgi apparatus membrane. Its subcellular location is the golgi apparatus. The protein resides in the trans-Golgi network. It localises to the cytoplasm. It is found in the cytosol. Its function is as follows. Positive regulator of amino acid starvation-induced autophagy. The sequence is that of Short coiled-coil protein (SCOC) from Homo sapiens (Human).